A 168-amino-acid polypeptide reads, in one-letter code: WAP four-disulfide core domain protein 2 (168 aa).

The signal sequence occupies residues 1–30; sequence MPACRLCLLATGLLLGLLLFTPLSATGTRA. 2 consecutive WAP domains span residues 31-74 and 119-167; these read EKPG…SKPN and NGEK…TTPK. 4 disulfide bridges follow: C36-C62, C45-C66, C49-C61, and C55-C70. The interval 100 to 123 is disordered; that stretch reads PLSRGQVSTKPPVVTKEGGNGEKQ. 4 disulfide bridges follow: C126–C154, C137–C158, C141–C153, and C147–C163.

In terms of assembly, homotrimer; disulfide-linked.

It is found in the secreted. In terms of biological role, broad range protease inhibitor. This Rattus norvegicus (Rat) protein is WAP four-disulfide core domain protein 2 (Wfdc2).